Consider the following 614-residue polypeptide: Chaperone protein DnaK (614 aa).

A Phosphothreonine; by autocatalysis modification is found at Thr-174. The tract at residues 576 to 614 (QTGGAAPGPDMGADPGAGGAQGDDNVVDAEYTEVDKDQK) is disordered. Residues 578–589 (GGAAPGPDMGAD) are compositionally biased toward low complexity.

The protein belongs to the heat shock protein 70 family.

Functionally, acts as a chaperone. The chain is Chaperone protein DnaK from Desulfitobacterium hafniense (strain DSM 10664 / DCB-2).